The following is a 373-amino-acid chain: DNA primase small subunit PriS (373 aa).

Active-site residues include Asp95, Asp97, and Asp281.

This sequence belongs to the eukaryotic-type primase small subunit family. In terms of assembly, heterodimer of a small subunit (PriS) and a large subunit (PriL). The cofactor is Mg(2+). Mn(2+) is required as a cofactor.

Catalytic subunit of DNA primase, an RNA polymerase that catalyzes the synthesis of short RNA molecules used as primers for DNA polymerase during DNA replication. The small subunit contains the primase catalytic core and has DNA synthesis activity on its own. Binding to the large subunit stabilizes and modulates the activity, increasing the rate of DNA synthesis while decreasing the length of the DNA fragments, and conferring RNA synthesis capability. The DNA polymerase activity may enable DNA primase to also catalyze primer extension after primer synthesis. May also play a role in DNA repair. The polypeptide is DNA primase small subunit PriS (Nitrosopumilus maritimus (strain SCM1)).